A 238-amino-acid chain; its full sequence is 1-(5-phosphoribosyl)-5-[(5-phosphoribosylamino)methylideneamino] imidazole-4-carboxamide isomerase (238 aa).

Aspartate 8 functions as the Proton acceptor in the catalytic mechanism. Aspartate 129 acts as the Proton donor in catalysis.

This sequence belongs to the HisA/HisF family.

The protein resides in the cytoplasm. It carries out the reaction 1-(5-phospho-beta-D-ribosyl)-5-[(5-phospho-beta-D-ribosylamino)methylideneamino]imidazole-4-carboxamide = 5-[(5-phospho-1-deoxy-D-ribulos-1-ylimino)methylamino]-1-(5-phospho-beta-D-ribosyl)imidazole-4-carboxamide. The protein operates within amino-acid biosynthesis; L-histidine biosynthesis; L-histidine from 5-phospho-alpha-D-ribose 1-diphosphate: step 4/9. The sequence is that of 1-(5-phosphoribosyl)-5-[(5-phosphoribosylamino)methylideneamino] imidazole-4-carboxamide isomerase from Anaeromyxobacter sp. (strain Fw109-5).